The following is an 80-amino-acid chain: Exodeoxyribonuclease 7 small subunit (80 aa).

It belongs to the XseB family. In terms of assembly, heterooligomer composed of large and small subunits.

The protein resides in the cytoplasm. The enzyme catalyses Exonucleolytic cleavage in either 5'- to 3'- or 3'- to 5'-direction to yield nucleoside 5'-phosphates.. Functionally, bidirectionally degrades single-stranded DNA into large acid-insoluble oligonucleotides, which are then degraded further into small acid-soluble oligonucleotides. This chain is Exodeoxyribonuclease 7 small subunit, found in Lactobacillus helveticus (strain DPC 4571).